A 117-amino-acid polypeptide reads, in one-letter code: Aspartate 1-decarboxylase (117 aa).

The active-site Schiff-base intermediate with substrate; via pyruvic acid is the serine 25. Serine 25 carries the post-translational modification Pyruvic acid (Ser). Substrate is bound at residue threonine 57. The active-site Proton donor is tyrosine 58. 73–75 (GAA) contacts substrate.

It belongs to the PanD family. As to quaternary structure, heterooctamer of four alpha and four beta subunits. It depends on pyruvate as a cofactor. Is synthesized initially as an inactive proenzyme, which is activated by self-cleavage at a specific serine bond to produce a beta-subunit with a hydroxyl group at its C-terminus and an alpha-subunit with a pyruvoyl group at its N-terminus.

It localises to the cytoplasm. It catalyses the reaction L-aspartate + H(+) = beta-alanine + CO2. Its pathway is cofactor biosynthesis; (R)-pantothenate biosynthesis; beta-alanine from L-aspartate: step 1/1. Functionally, catalyzes the pyruvoyl-dependent decarboxylation of aspartate to produce beta-alanine. The polypeptide is Aspartate 1-decarboxylase (Bacteroides thetaiotaomicron (strain ATCC 29148 / DSM 2079 / JCM 5827 / CCUG 10774 / NCTC 10582 / VPI-5482 / E50)).